Consider the following 519-residue polypeptide: Histidine ammonia-lyase (519 aa).

The 5-imidazolinone (Ala-Gly) cross-link spans 146-148 (ASG). Ser147 is modified (2,3-didehydroalanine (Ser)).

Belongs to the PAL/histidase family. In terms of processing, contains an active site 4-methylidene-imidazol-5-one (MIO), which is formed autocatalytically by cyclization and dehydration of residues Ala-Ser-Gly.

The protein resides in the cytoplasm. It catalyses the reaction L-histidine = trans-urocanate + NH4(+). The protein operates within amino-acid degradation; L-histidine degradation into L-glutamate; N-formimidoyl-L-glutamate from L-histidine: step 1/3. In Bradyrhizobium diazoefficiens (strain JCM 10833 / BCRC 13528 / IAM 13628 / NBRC 14792 / USDA 110), this protein is Histidine ammonia-lyase.